We begin with the raw amino-acid sequence, 509 residues long: MMKGSPSVPPAGCLLPLLLLLFTGVSGEVSWFSVKGPAEPITVLLGTEATLPCQLSPEQSAARMHIRWYRAQPTPAVLVFHNGQEQGEVQMPEYRGRTQMVRQAIDMGSVALQIQQVQASDDGLYHCQFTDGFTSQEVSMELRVIGLGSAPLVHMTGPENDGIRVLCSSSGWFPKPKVQWRDTSGNMLLSSSELQTQDREGLFQVEVSLLVTDRAIGNVICSIQNPMYDQEKSKAILLPEPFFPKTCPWKVALVCSVLILLVLLGGISLGIWKEHQVKRREIKKWSKEHEEMLLLKKGTKSVLKIRDDLQADLDRRKALYKEDWKKALLYPDWRKELFQEAPVRINYEMPDQDKTDSRTEENRGEETVSSSQVDHNLITLSQEGFMLGRYYWEVDVKDTEEWTLGVYELCTQDASLTDPLRKFRVLEKNGDGYRALDFCSQNINSEEPLQLKTRPLKIAIFLDQEDNDLSFYNMTDETHIFSFAQVPFLGSPYPYFTRNSMGLSATAQP.

Positions M1–G27 are cleaved as a signal peptide. Ig-like V-type domains are found at residues E28–S139 and P151–L237. At E28–K250 the chain is on the extracellular side. Intrachain disulfides connect C53/C127 and C167/C221. A helical membrane pass occupies residues V251–I271. Over W272–P509 the chain is Cytoplasmic. Residues R316–P509 enclose the B30.2/SPRY domain. Residues M349–Q372 are disordered. Residues D351 to E366 show a composition bias toward basic and acidic residues.

The protein belongs to the immunoglobulin superfamily. BTN/MOG family.

Its subcellular location is the membrane. This Mus musculus (Mouse) protein is Butyrophilin-like protein 1 (Btnl1).